The sequence spans 450 residues: Molybdate-anion transporter (450 aa).

The next 12 membrane-spanning stretches (helical) occupy residues 1 to 21 (MLVT…GLEL), 43 to 63 (LDFY…APYL), 79 to 99 (ILYV…SSLV), 128 to 148 (FVLL…FSAF), 174 to 194 (AAFW…AVAS), 195 to 215 (WIGL…ALAG), 249 to 269 (VLLL…FVFL), 278 to 298 (GAPL…GSSL), 311 to 331 (PMHL…MLTF), 344 to 364 (FIAF…MSFL), 376 to 396 (GVLN…LLVL), and 409 to 429 (FSIC…LFTV).

It belongs to the major facilitator superfamily. In terms of tissue distribution, expressed ubiquitously but at relatively higher levels in the olfactory bulb and the skeletal muscle.

It is found in the cell membrane. In terms of biological role, mediates high-affinity intracellular uptake of the rare oligo-element molybdenum. The protein is Molybdate-anion transporter (MFSD5) of Homo sapiens (Human).